A 505-amino-acid chain; its full sequence is Lysine--tRNA ligase (505 aa).

Residues Glu-415 and Glu-422 each coordinate Mg(2+).

It belongs to the class-II aminoacyl-tRNA synthetase family. As to quaternary structure, homodimer. Mg(2+) serves as cofactor.

Its subcellular location is the cytoplasm. It catalyses the reaction tRNA(Lys) + L-lysine + ATP = L-lysyl-tRNA(Lys) + AMP + diphosphate. This chain is Lysine--tRNA ligase, found in Enterobacter sp. (strain 638).